Here is a 155-residue protein sequence, read N- to C-terminus: DNA-directed RNA polymerase 1A (155 aa).

Residue Asp88 is part of the active site.

This sequence belongs to the phage and mitochondrial RNA polymerase family.

It catalyses the reaction RNA(n) + a ribonucleoside 5'-triphosphate = RNA(n+1) + diphosphate. DNA-dependent RNA polymerase catalyzes the transcription of DNA into RNA using the four ribonucleoside triphosphates as substrates. The protein is DNA-directed RNA polymerase 1A (RPOT1-SYL) of Nicotiana tabacum (Common tobacco).